A 90-amino-acid chain; its full sequence is Small ribosomal subunit protein bS16 (90 aa).

The protein belongs to the bacterial ribosomal protein bS16 family. In terms of assembly, part of the 30S ribosomal subunit.

This is Small ribosomal subunit protein bS16 from Bacillus subtilis (strain 168).